Consider the following 111-residue polypeptide: C-type lectin lectoxin-Enh1 (111 aa).

The signal sequence occupies residues 1 to 23 (MGQFTVVSLGLLAMFLSLSGAKG). A disulfide bridge connects residues C26 and C37. The 76-residue stretch at 33–108 (RNGVCNKLFP…CASLHPFICQ (76 aa)) folds into the C-type lectin domain. Positions 72–74 (EPN) match the Mannose-binding motif. 3 residues coordinate Ca(2+): E80, N95, and D96. The cysteines at positions 82 and 99 are disulfide-linked.

It belongs to the true venom lectin family. Expressed by the venom gland.

It localises to the secreted. Mannose-binding lectin which recognizes specific carbohydrate structures and agglutinates a variety of animal cells by binding to cell-surface glycoproteins and glycolipids. May be a calcium-dependent lectin. The polypeptide is C-type lectin lectoxin-Enh1 (Pseudoferania polylepis (Macleay's water snake)).